A 288-amino-acid polypeptide reads, in one-letter code: MKLPIFIADAFTATAFRGNPAAVCLLERTLEEDAHQQIAREMNLSETAFIRKLQPTDSFTQSSRFGLRWFTPVSEVPLCGHATLASAAVLFHKIQNRNSTLTFVTMSGELKARRAEDGIVLDFPVYPTFPQDFHEVEDLIKAAIGDTLVQDIRYSTDTRKLLVRLSDSYDRSFLESLKVNTEPLPAIEKTGKVRGLILTVKGEPGGQTAPYDFYSRYFAPWVGIAEDPVTGSAHTVLSSYWSQQLRKKEMRAFQCSRRGGELDISLRPDGRVDIKGGAVIVLEGTLTA.

E46 is an active-site residue.

The protein belongs to the PhzF family.

This chain is Phenazine biosynthesis-like domain-containing protein 1 (Pbld1), found in Mus musculus (Mouse).